A 170-amino-acid polypeptide reads, in one-letter code: Cathelicidin antimicrobial peptide (170 aa).

Positions 1–30 (MKTQRHGPSLGRWSLVLLLLGLVMPLAIVA) are cleaved as a signal peptide. Residues 31–131 (QVLSYQEAVL…DISCDKDNRR (101 aa)) constitute a propeptide, cathelin-like domain (CLD). 2 disulfides stabilise this stretch: C86-C97 and C108-C125. Residues 150–162 (LKKIGQKIKDFWG) form an active core region.

This sequence belongs to the cathelicidin family. As to quaternary structure, monomer, homodimer or homotrimer (in vitro). Oligomerizes as tetra- or hexamer in solution (in vitro). Proteolytically cleaved by proteinase PRTN3 into antibacterial peptide LL-37. Proteolytically cleaved by cathepsin CTSG and neutrophil elastase ELANE. Post-translationally, resistant to proteolytic degradation in solution, and when bound to both zwitterionic (mimicking mammalian membranes) and negatively charged membranes (mimicking bacterial membranes). In terms of processing, after secretion onto the skin surface, the CAMP gene product is processed by a serine protease-dependent mechanism into multiple novel antimicrobial peptides distinct from and shorter than cathelicidin LL-37. These peptides show enhanced antimicrobial action, acquiring the ability to kill skin pathogens such as S.aureus, E.coli and C.albicans. These peptides have lost the ability to stimulate CXCL8/IL8 release from keratinocytes. The peptides act synergistically, killing bacteria at lower concentrations when present together, and maintain activity at increased salt condition.

The protein localises to the secreted. The protein resides in the vesicle. Antimicrobial protein that is an integral component of the innate immune system. Binds to bacterial lipopolysaccharides (LPS). Acts via neutrophil N-formyl peptide receptors to enhance the release of CXCL2. Postsecretory processing generates multiple cathelicidin antimicrobial peptides with various lengths which act as a topical antimicrobial defense in sweat on skin. The unprocessed precursor form, cathelicidin antimicrobial peptide, inhibits the growth of Gram-negative E.coli and E.aerogenes with efficiencies comparable to that of the mature peptide LL-37 (in vitro). In terms of biological role, antimicrobial peptide that is an integral component of the innate immune system. Binds to bacterial lipopolysaccharides (LPS). Causes membrane permeabilization by forming transmembrane pores (in vitro). Causes lysis of E.coli. Exhibits antimicrobial activity against Gram-negative bacteria such as P.aeruginosa, S.typhimurium, E.aerogenes, E.coli and P.syringae, Gram-positive bacteria such as L.monocytogenes, S.epidermidis, S.pyogenes and S.aureus, as well as vancomycin-resistant enterococci (in vitro). Exhibits antimicrobial activity against methicillin-resistant S.aureus, P.mirabilis, and C.albicans in low-salt media, but not in media containing 100 mM NaCl (in vitro). Forms chiral supramolecular assemblies with quinolone signal (PQS) molecules of P.aeruginosa, which may lead to interference of bacterial quorum signaling and perturbance of bacterial biofilm formation. May form supramolecular fiber-like assemblies on bacterial membranes. Induces cytokine and chemokine producation as well as TNF/TNFA and CSF2/GMCSF production in normal human keratinocytes. Exhibits hemolytic activity against red blood cells. Functionally, exhibits antimicrobial activity against E.coli and B.megaterium (in vitro). The protein is Cathelicidin antimicrobial peptide of Trachypithecus cristatus (Silvered leaf-monkey).